The primary structure comprises 473 residues: Glycine--tRNA ligase (473 aa).

Arg101 and Glu172 together coordinate substrate. Residues 204 to 206 (RNE), 214 to 219 (FRTREF), 289 to 290 (EL), and 333 to 336 (GVER) each bind ATP. A substrate-binding site is contributed by 219 to 223 (FEQME). 329–333 (EPSVG) lines the substrate pocket.

Belongs to the class-II aminoacyl-tRNA synthetase family. Homodimer.

The protein localises to the cytoplasm. The catalysed reaction is tRNA(Gly) + glycine + ATP = glycyl-tRNA(Gly) + AMP + diphosphate. Catalyzes the attachment of glycine to tRNA(Gly). The polypeptide is Glycine--tRNA ligase (Ureaplasma parvum serovar 3 (strain ATCC 27815 / 27 / NCTC 11736)).